The primary structure comprises 93 residues: Small ribosomal subunit protein uS19 (93 aa).

It belongs to the universal ribosomal protein uS19 family.

Functionally, protein S19 forms a complex with S13 that binds strongly to the 16S ribosomal RNA. The polypeptide is Small ribosomal subunit protein uS19 (Lactobacillus helveticus (strain DPC 4571)).